Here is a 525-residue protein sequence, read N- to C-terminus: NAD(P)H-quinone oxidoreductase chain 4 1 (525 aa).

A run of 14 helical transmembrane segments spans residues 6-26 (FPWLTTIILLPIAASLLIPII), 36-56 (WYALIVGLIDFALIVYAFYTS), 91-111 (LIILTGFITTLATLAAWPVTL), 115-135 (LFYFLLLAMYGGQIAVFAVQD), 136-156 (LLLFFLVWELELIPVYLLLAI), 169-189 (FILYTAGGSLFILLAALTMAF), 212-232 (LLLYAGFLIAYAIKLPIIPLH), 243-263 (TAPAHMLLAGILLKMGGYALI), 277-297 (FAPVLVVLGVVNIIYAALTSF), 314-334 (MGFVIIGFASFTDLGLSGAVL), 335-355 (QMVSHGLIGASLFFLVGATYD), 375-397 (IFAMFTACSMASLALPGMSGFVA), 417-437 (VIVVFLMAVGVILTPIYLLSM), and 464-484 (VFVIACLLVPIIGIGFYPKLL).

This sequence belongs to the complex I subunit 4 family.

It is found in the cellular thylakoid membrane. It carries out the reaction a plastoquinone + NADH + (n+1) H(+)(in) = a plastoquinol + NAD(+) + n H(+)(out). It catalyses the reaction a plastoquinone + NADPH + (n+1) H(+)(in) = a plastoquinol + NADP(+) + n H(+)(out). Its function is as follows. NDH-1 shuttles electrons from NAD(P)H, via FMN and iron-sulfur (Fe-S) centers, to quinones in the respiratory chain. The immediate electron acceptor for the enzyme in this species is believed to be plastoquinone. Couples the redox reaction to proton translocation (for every two electrons transferred, four hydrogen ions are translocated across the cytoplasmic membrane), and thus conserves the redox energy in a proton gradient. The sequence is that of NAD(P)H-quinone oxidoreductase chain 4 1 from Trichormus variabilis (strain ATCC 29413 / PCC 7937) (Anabaena variabilis).